The primary structure comprises 433 residues: Casein kinase 1-like protein 5 (433 aa).

The Protein kinase domain maps to 9–278 (FRLGRKIGSG…LKRLFRNLFI (270 aa)). Residues 15–23 (IGSGSFGEI) and Lys38 contribute to the ATP site. Asp128 functions as the Proton acceptor in the catalytic mechanism. The tract at residues 297–433 (QSQSGNPQPR…DDVEPQSKAL (137 aa)) is disordered. The span at 342-359 (LKQKDKNGNDSAIAKDKL) shows a compositional bias: basic and acidic residues. The span at 362–375 (GSLNLGRSEGSSSR) shows a compositional bias: low complexity. Ser390 carries the post-translational modification Phosphoserine. Residues 407 to 423 (INNNAGDETAATPQSNG) show a composition bias toward polar residues.

The protein belongs to the protein kinase superfamily. CK1 Ser/Thr protein kinase family. Casein kinase I subfamily. As to quaternary structure, monomer. Autophosphorylated.

Its subcellular location is the cytoplasm. It carries out the reaction L-seryl-[protein] + ATP = O-phospho-L-seryl-[protein] + ADP + H(+). The catalysed reaction is L-threonyl-[protein] + ATP = O-phospho-L-threonyl-[protein] + ADP + H(+). In terms of biological role, casein kinases are operationally defined by their preferential utilization of acidic proteins such as caseins as substrates. It can phosphorylate a large number of proteins. The chain is Casein kinase 1-like protein 5 from Arabidopsis thaliana (Mouse-ear cress).